The sequence spans 696 residues: DNA ligase (696 aa).

NAD(+) contacts are provided by residues 36–40, 85–86, and Glu123; these read DAEYD and SL. Catalysis depends on Lys125, which acts as the N6-AMP-lysine intermediate. NAD(+) contacts are provided by Arg146, Glu181, Lys319, and Lys343. Zn(2+) contacts are provided by Cys437, Cys440, Cys455, and Cys461. Positions 618 to 696 constitute a BRCT domain; the sequence is PEGTSLAGKT…EDGLKALLGL (79 aa).

This sequence belongs to the NAD-dependent DNA ligase family. LigA subfamily. Mg(2+) is required as a cofactor. Requires Mn(2+) as cofactor.

It catalyses the reaction NAD(+) + (deoxyribonucleotide)n-3'-hydroxyl + 5'-phospho-(deoxyribonucleotide)m = (deoxyribonucleotide)n+m + AMP + beta-nicotinamide D-nucleotide.. Its function is as follows. DNA ligase that catalyzes the formation of phosphodiester linkages between 5'-phosphoryl and 3'-hydroxyl groups in double-stranded DNA using NAD as a coenzyme and as the energy source for the reaction. It is essential for DNA replication and repair of damaged DNA. The protein is DNA ligase of Bordetella parapertussis (strain 12822 / ATCC BAA-587 / NCTC 13253).